We begin with the raw amino-acid sequence, 170 residues long: MNDSTLALRRERRLLMLLGWVCIALLAGALYLQYVKNEDPCPLCIIQRYFFAAIGIFAFLAAGIRNWRVIWVFELLIAIAAAGGVGTAARHLSIQMNPGFSCGFDTLQPIVDSLPPAQWFPGMFKVAGLCETVYPPIFGILLPGWALIGFAVILVAVASSLWRHRRKLAG.

The Cytoplasmic segment spans residues 1–14 (MNDSTLALRRERRL). Residues 15–31 (LMLLGWVCIALLAGALY) form a helical membrane-spanning segment. Over 32-49 (LQYVKNEDPCPLCIIQRY) the chain is Periplasmic. Cysteines 41 and 44 form a disulfide. A helical membrane pass occupies residues 50–64 (FFAAIGIFAFLAAGI). Topologically, residues 65-71 (RNWRVIW) are cytoplasmic. The chain crosses the membrane as a helical span at residues 72 to 89 (VFELLIAIAAAGGVGTAA). The Periplasmic portion of the chain corresponds to 90–144 (RHLSIQMNPGFSCGFDTLQPIVDSLPPAQWFPGMFKVAGLCETVYPPIFGILLPG). An intrachain disulfide couples C102 to C130. Residues 145–163 (WALIGFAVILVAVASSLWR) form a helical membrane-spanning segment. Topologically, residues 164 to 170 (HRRKLAG) are cytoplasmic.

It belongs to the DsbB family.

The protein resides in the cell inner membrane. Functionally, required for disulfide bond formation in some periplasmic proteins. Acts by oxidizing the DsbA protein. The chain is Disulfide bond formation protein B from Burkholderia ambifaria (strain ATCC BAA-244 / DSM 16087 / CCUG 44356 / LMG 19182 / AMMD) (Burkholderia cepacia (strain AMMD)).